We begin with the raw amino-acid sequence, 315 residues long: Cobalamin biosynthesis protein CobD (315 aa).

The next 7 membrane-spanning stretches (helical) occupy residues 1–21 (MLDI…YWFP), 50–70 (VFGG…PFII), 79–99 (VIYH…KSLH), 151–171 (DGII…AMMY), 209–229 (VTGI…FYSI), 250–270 (AAAA…GEVV), and 291–311 (IILM…IICF).

It belongs to the CobD/CbiB family.

It localises to the cell membrane. The protein operates within cofactor biosynthesis; adenosylcobalamin biosynthesis. Converts cobyric acid to cobinamide by the addition of aminopropanol on the F carboxylic group. The sequence is that of Cobalamin biosynthesis protein CobD from Clostridium acetobutylicum (strain ATCC 824 / DSM 792 / JCM 1419 / IAM 19013 / LMG 5710 / NBRC 13948 / NRRL B-527 / VKM B-1787 / 2291 / W).